We begin with the raw amino-acid sequence, 1166 residues long: MLRMKLPPKSTHPSEPPPDAEEPEADARPGAKAPLRRRRDCRPPPPPTGLPRGPPPPPSPPRGLEPPVASGPTAGAGMPGGGGHAAALREQERVYEWFGLVLGSAQRLEFMCGLLDLCNPLELRFLGSCLEDLARKDYHYLRDSEAKANGLSDPGSLADFREPAVRSRLIVYLALLGSENREAAGRLHRLLPQVDAVLRSLRATRAEGSRGSVEDEPSGDGEQDAEKDGPGPEGSGCAKLGTGGGLGFRAQEELLLLFTMASLHPAFSFHQRVTLREHLERLRSALRVEPEDAEVEPSNFAGSRAQNDSACGDYIQSNETGLVEQAQIPPDGLTVAPHRAQREAVHIEKIMLKGVQRKRADKYWEYTFKVNWSDLSVTTVTKTHQELQEFLLKLPKEFSSESFDKTILKALNQGSLRREERRHPDLEPILRQLFSTSPQAFLQSHKVRSFFRSISSESQHNFNNLQSSLKTSKILEHLKEDSSEASSQEEDVLQHTIIHKKHAGKSPALNVATSCSPLDGLTMQYAEQNGIVDWRNQGCAAIQHSEHCVSSADQHSAEKRSLSSGNKKKGKPQVEKEKVKKTEDRLNSRINGIRLSAPQHVHGSTVKDMNLDIGSGHDTCGETSSESYSSPSSPRHDGRESLESEEEKDRDSDSNSEDSVNPSSARFSGYGSVAQTIAVKPPAETVSLGTEDGNLLEAALTSHKYPHIPFMPTLHCVTHNGAQKSQVVIPSPKSADGKTLGMLVPNAVAISAVMESSNSAPVGILGPAASGESEKHLELLASPLPLPSTFLPHSSAPALQLTLQSLKLQPPQGSSDSCPVSIPPQPTGSLSIGSPNTAFIPVHNPGSFPGSPVATTDPITKSAPQVVGLNQMVPQIEGNTGTVPQPSNVKVVLPAAGLSAAQPPASFPFPGSPQAASALPTQNSSALNAATSAQPASTGISPSQSTVPPAVPTHTPGPAPSPSPALTHSTAQSDSTSYISAVGNTNANGTIVPPQQMGPCGSCGRRCSCGTNGNLQLNSYYYPNPMPGPMYRLPSFFTLPSICNGSYLNQAHQSNGNQLPFFLPQTPYANGLVHDPVMGSQASYGMQQMAGFGRLYPVYPAPNVVANTSGSGPKKNGNVSCYNCGVSGHYAQDCKQSSMEANQQGTYRLRYAPPLPPSNDTLDSAD.

Disordered stretches follow at residues 1–85 (MLRM…GGHA), 205–240 (RAEGSRGSVEDEPSGDGEQDAEKDGPGPEGSGCAKL), 550–668 (SSAD…ARFS), and 904–982 (PASF…ISAV). Positions 43–64 (PPPPPTGLPRGPPPPPSPPRGL) are enriched in pro residues. Low complexity predominate over residues 65–76 (EPPVASGPTAGA). The segment covering 214–223 (EDEPSGDGEQ) has biased composition (acidic residues). The segment covering 572–587 (PQVEKEKVKKTEDRLN) has biased composition (basic and acidic residues). Residues 624–633 (SSESYSSPSS) show a composition bias toward low complexity. Positions 634–653 (PRHDGRESLESEEEKDRDSD) are enriched in basic and acidic residues. The span at 919–947 (LPTQNSSALNAATSAQPASTGISPSQSTV) shows a compositional bias: polar residues. Over residues 949–963 (PAVPTHTPGPAPSPS) the composition is skewed to pro residues. Polar residues predominate over residues 964 to 982 (PALTHSTAQSDSTSYISAV). The CCHC-type zinc-finger motif lies at 1119–1136 (VSCYNCGVSGHYAQDCKQ).

The polypeptide is Zinc finger CCHC domain-containing protein 2 (Zcchc2) (Mus musculus (Mouse)).